The primary structure comprises 125 residues: Phosphoribosyl-AMP cyclohydrolase (125 aa).

Asp-74 contacts Mg(2+). Cys-75 provides a ligand contact to Zn(2+). Positions 76 and 78 each coordinate Mg(2+). Residues Cys-92 and Cys-99 each coordinate Zn(2+).

This sequence belongs to the PRA-CH family. Homodimer. Mg(2+) serves as cofactor. Zn(2+) is required as a cofactor.

It is found in the cytoplasm. It carries out the reaction 1-(5-phospho-beta-D-ribosyl)-5'-AMP + H2O = 1-(5-phospho-beta-D-ribosyl)-5-[(5-phospho-beta-D-ribosylamino)methylideneamino]imidazole-4-carboxamide. It functions in the pathway amino-acid biosynthesis; L-histidine biosynthesis; L-histidine from 5-phospho-alpha-D-ribose 1-diphosphate: step 3/9. Catalyzes the hydrolysis of the adenine ring of phosphoribosyl-AMP. This is Phosphoribosyl-AMP cyclohydrolase from Syntrophotalea carbinolica (strain DSM 2380 / NBRC 103641 / GraBd1) (Pelobacter carbinolicus).